A 336-amino-acid polypeptide reads, in one-letter code: Aldo-keto reductase str7 (336 aa).

Asp-57 contributes to the NADP(+) binding site. Residue Tyr-62 is the Proton donor of the active site. Residue His-124 participates in substrate binding. NADP(+) contacts are provided by residues 154 to 155 (SE), Gln-174, 206 to 220 (SPLG…YKSP), and 283 to 291 (KKIKYLEEN).

The protein belongs to the aldo/keto reductase family. Aldo/keto reductase 2 subfamily.

It functions in the pathway mycotoxin biosynthesis. Functionally, aldo-keto reductase; part of the gene cluster that mediates the biosynthesis of strobilurin A, an antifungal polyketide that contains a key beta-methoxyacrylate toxophore that targets the complex III of the mitochondrial electron transport chain. Strobilurin biosynthesis begins with construction of benzoyl CoA by step-wise elimination of ammonia from phenylalanine by the phenylalanine ammonia-lyase str11, oxygenation by str8 and retro-Claisen reaction to form benzoic acid, which is activated to its CoA thiolester benzoyl CoA by the dedicated CoA ligase str10. Benzoyl CoA forms the starter unit for the highly reducing polyketide synthase stpks1 that produces the polyketide prestrobilutin A. The FAD-dependent oxygenase str9 then catalyzes the key oxidative rearrangement responsible for the creation of the beta-methoxyacrylate toxophore. Str9 performs epoxidation of the 2,3 olefin of prestrobilutin A, followed by Meinwald rearrangement to furnish the aldehyde intermediate. Rapid enolization of the aldehyde intermediate would give the beta-methoxyacrylate skeleton and methylations catalyzed by str2 and str3 complete the synthesis and lead to the production of strobilurin A. The short-chain dehydrogenase stl2 and the dehydrogenase str4 play a role in the shunt pathway leading to the production of bolineol. The cluster encodes no obvious halogenase gene that could be involved in production of strobilurin B, nor any obvious dimethylallyl-transferase that could be involved in the production of strobilurin G. It is possible that unknown proteins encoded in, or near, the cluster (such as str1 or stl1) may form new classes of halogenases or dimethylally-transferases, or that the responsible genes are located elsewhere on the genome. Similarly, proteins encoded by str5/str6 hydrolases appear to have no chemical role in the biosynthesis of strobilurin A. Finally, no obvious self-resistance gene is found within the cluster. The chain is Aldo-keto reductase str7 from Strobilurus tenacellus.